The sequence spans 808 residues: MAGTVVLDDVELREAQRDYLDFLDDEEDQGIYQSKVRELISDNQYRLIVNVNDLRRKNEKRANRLLSNAFEELVAFQRALKDFVASIDATYAKQYEEFYIGLEGSFGSKHVSPRTLTSCFLSCVVCVEGIVTKCSLVRPKVVRSVHYCPATKKTIERRYSDLTSLVAFPSSSVYPTKDEENNPLETEYGLSVYKDHQIITIQEMPEKAPAGQLPRSVDVILDDDLVDRVKPGDRVQVVGTYRCLPGKKGGYTSGTFRTVLIACNVKQMSKDVQPSFSAEDIAKIKKFSKTRSKDIFDQLARSLAPSIHGHDYVKKAILCLLLGGVERDLENGSHIRGDINILLIGDPSVAKSQLLRYVLCTAPRAIPTTGRGSSGVGLTAAVTTDQETGERRLEAGAMVLADRGVVCIDEFDKMSDMDRTAIHEVMEQGRVTIAKAGIHARLNARCSVLAAANPVYGRYDQYKTPMENIGLQDSLLSRFDLLFIMLDQMDPEQDREISDHVLRMHRYRAPGEQDGDAMPLGSAVDILATDDPNFSPDDQQDTQIYEKHDNLLHGIKKKKEKMVSAAFMRKYIHVAKIIKPVLTQESAAYIAEEYSRLRSQDSMSSDTARTSPVTARTLETLIRLATAHAKARMSKTVDLQDAEEAVELVQYAYFKKVLEKEKKRKKRSEDESDAEDEVEKSQEDQEQKTKRRRICPSDAKEGDSYDPYDFTNTEEEMPQVHTPKATDSQETKESQKVELSESRLKAFKAALLEVFREAHAQSVGMNRLTESVNRDNEEPFSSAEIQAALSRMQDDNQVMVSEGIVFLI.

Alanine 2 carries the post-translational modification N-acetylalanine. 2 positions are modified to phosphoserine: serine 160 and serine 275. An N6-acetyllysine modification is found at lysine 293. Residues 295-502 (IFDQLARSLA…QDREISDHVL (208 aa)) enclose the MCM domain. 5 residues coordinate ADP: glutamine 353, leucine 393, glutamate 394, alanine 395, and alanine 397. The Arginine finger signature appears at 477–480 (SRFD). Alanine 523 is a binding site for ATP. Serine 535 is modified (phosphoserine; by ATM). N6-acetyllysine is present on lysine 547. Serine 611 is modified (phosphoserine). The segment at 662-739 (KKRKKRSEDE…ETKESQKVEL (78 aa)) is disordered. Arginine 664 contacts ATP. A phosphoserine mark is found at serine 668, serine 672, and serine 681. Positions 679-688 (EKSQEDQEQK) are enriched in basic and acidic residues. Phosphotyrosine is present on tyrosine 708. A phosphothreonine mark is found at threonine 713 and threonine 722. Residues 727–739 (DSQETKESQKVEL) are compositionally biased toward basic and acidic residues. 2 positions are modified to phosphoserine: serine 728 and serine 734.

The protein belongs to the MCM family. Component of the MCM2-7 complex. The complex forms a toroidal hexameric ring with the proposed subunit order MCM2-MCM6-MCM4-MCM7-MCM3-MCM5. Component of the CMG helicase complex, a hexameric ring of related MCM2-7 subunits stabilized by CDC45 and the tetrameric GINS complex. Associated with the replication-specific DNA polymerase alpha. Interacts with MCMBP. Interacts with ANKRD17. Interacts with MCM3AP isoform MCM3AP; this interaction leads to MCM3 acetylation. In terms of processing, acetylated by MCM3AP. Post-translationally, O-glycosylated (O-GlcNAcylated), in a cell cycle-dependent manner.

The protein resides in the nucleus. Its subcellular location is the chromosome. The catalysed reaction is ATP + H2O = ADP + phosphate + H(+). Functionally, acts as a component of the MCM2-7 complex (MCM complex) which is the replicative helicase essential for 'once per cell cycle' DNA replication initiation and elongation in eukaryotic cells. Core component of CDC45-MCM-GINS (CMG) helicase, the molecular machine that unwinds template DNA during replication, and around which the replisome is built. The active ATPase sites in the MCM2-7 ring are formed through the interaction surfaces of two neighboring subunits such that a critical structure of a conserved arginine finger motif is provided in trans relative to the ATP-binding site of the Walker A box of the adjacent subunit. The six ATPase active sites, however, are likely to contribute differentially to the complex helicase activity. Required for the entry in S phase and for cell division. The chain is DNA replication licensing factor MCM3 (MCM3) from Bos taurus (Bovine).